A 664-amino-acid polypeptide reads, in one-letter code: Glycine--tRNA ligase beta subunit (664 aa).

It belongs to the class-II aminoacyl-tRNA synthetase family. As to quaternary structure, tetramer of two alpha and two beta subunits.

It is found in the cytoplasm. It carries out the reaction tRNA(Gly) + glycine + ATP = glycyl-tRNA(Gly) + AMP + diphosphate. The sequence is that of Glycine--tRNA ligase beta subunit from Rickettsia peacockii (strain Rustic).